We begin with the raw amino-acid sequence, 602 residues long: MHKYRTHNCNELKISDVGAEVKLSGWVHRRRDHGNLVFVDLRDHYGITQIVFTDQNPQLMDDASRLRYESVVTVIGKVVARSEETINNTLPTGHIEVLAGEFIVESAADTLPFVINTEKDAPEDSRLKHRFLDLRREKLHNNIMLRSQIISYIRQLMTARGFTEFQTPILTASSPEGARDFLVPSRLHPGKFYALPQAPQQFKQLLMVSGFDRYFQIAPCFRDEDARADRSPGEFYQLDIEMSFVTQEDIFSTIEPVMYELFTKFTDKKVSEAPFIRIPYNESMLKYGSDKPDLRNPIVIADVTEIFRDSDFTIFRENIKKGSIVRAIPAPYAAAQPRSFFDKMIEFAISEGAGGLGYIQFSETGEAKGPVAKFLSTQQLEDLKATANISNGDAVFFASDKKDKAAKLAGKVRIKLADELDLLEKDCFKFCWITDFPFYELNEETGKIDFSHNPFSMPQGGLEALENAKTTEELLELTAYQYDIVCNGIELSSGAVRNHKPEIMYKAFAIAGYSEEEVDKRFGGMIRAFKFGAPPHGGIAPGIDRIVMLLAEATNIREIIAFPLNQQAEDLLMNAPNYVEDKALKELNVMLSPSARKNAEKE.

E176 provides a ligand contact to L-aspartate. Residues 200-203 (QQFK) form an aspartate region. The L-aspartate site is built by R222 and H452. An ATP-binding site is contributed by 222 to 224 (RDE). E490 contributes to the ATP binding site. R497 serves as a coordination point for L-aspartate. 542–545 (GIDR) is a binding site for ATP.

Belongs to the class-II aminoacyl-tRNA synthetase family. Type 1 subfamily. As to quaternary structure, homodimer.

It localises to the cytoplasm. It catalyses the reaction tRNA(Asx) + L-aspartate + ATP = L-aspartyl-tRNA(Asx) + AMP + diphosphate. In terms of biological role, aspartyl-tRNA synthetase with relaxed tRNA specificity since it is able to aspartylate not only its cognate tRNA(Asp) but also tRNA(Asn). Reaction proceeds in two steps: L-aspartate is first activated by ATP to form Asp-AMP and then transferred to the acceptor end of tRNA(Asp/Asn). The polypeptide is Aspartate--tRNA(Asp/Asn) ligase (Rickettsia bellii (strain OSU 85-389)).